Reading from the N-terminus, the 310-residue chain is MKGLVIKNTGSWYQVKTDDGQLVECKIKGNFRLKGIRSTNPVAVGDRVQIILNQEGTAFISEIEDRKNYIIRRSSNLSKQSHILAANLDQCMLVVTVNYPETSTTFIDRFLASAEAYRVPVKILFNKVDAYDEDELHYLDSLITLYTQIGYPCFKISALTGEGVDAIREELKGRVTLFSGHSGVGKSTLINALVPGLEVKTAEISAYHNKGMHTTTFSEMFPVPGDGYIIDTPGIKGFGTFDMEEEEIGHYFPEIFKTSANCKYGNCTHRQEPGCAVRKAVEEHYISESRYTSYLSMLEDKEEGKYRAAY.

The CP-type G domain maps to 77–238 (LSKQSHILAA…IIDTPGIKGF (162 aa)). GTP is bound by residues 126–129 (NKVD) and 180–188 (GHSGVGKST). Zn(2+)-binding residues include Cys-262, Cys-267, His-269, and Cys-275.

The protein belongs to the TRAFAC class YlqF/YawG GTPase family. RsgA subfamily. In terms of assembly, monomer. Associates with 30S ribosomal subunit, binds 16S rRNA. It depends on Zn(2+) as a cofactor.

The protein localises to the cytoplasm. Functionally, one of several proteins that assist in the late maturation steps of the functional core of the 30S ribosomal subunit. Helps release RbfA from mature subunits. May play a role in the assembly of ribosomal proteins into the subunit. Circularly permuted GTPase that catalyzes slow GTP hydrolysis, GTPase activity is stimulated by the 30S ribosomal subunit. This chain is Small ribosomal subunit biogenesis GTPase RsgA, found in Bacteroides fragilis (strain ATCC 25285 / DSM 2151 / CCUG 4856 / JCM 11019 / LMG 10263 / NCTC 9343 / Onslow / VPI 2553 / EN-2).